We begin with the raw amino-acid sequence, 522 residues long: UPF0288 protein MTH_1865 (522 aa).

It belongs to the UPF0288 family.

This is UPF0288 protein MTH_1865 from Methanothermobacter thermautotrophicus (strain ATCC 29096 / DSM 1053 / JCM 10044 / NBRC 100330 / Delta H) (Methanobacterium thermoautotrophicum).